A 266-amino-acid polypeptide reads, in one-letter code: Phosphatidylglycerol--prolipoprotein diacylglyceryl transferase (266 aa).

7 consecutive transmembrane segments (helical) span residues 10–30 (VALA…LIGI), 56–76 (LVFW…VLFY), 92–112 (WKGG…VWWF), 120–140 (FFQL…AGRI), 171–191 (PSQL…LWLF), 199–219 (ASVS…VEFV), and 233–253 (WLTM…ALMV). Arginine 139 serves as a coordination point for a 1,2-diacyl-sn-glycero-3-phospho-(1'-sn-glycerol).

It belongs to the Lgt family.

It is found in the cell inner membrane. The enzyme catalyses L-cysteinyl-[prolipoprotein] + a 1,2-diacyl-sn-glycero-3-phospho-(1'-sn-glycerol) = an S-1,2-diacyl-sn-glyceryl-L-cysteinyl-[prolipoprotein] + sn-glycerol 1-phosphate + H(+). Its pathway is protein modification; lipoprotein biosynthesis (diacylglyceryl transfer). Functionally, catalyzes the transfer of the diacylglyceryl group from phosphatidylglycerol to the sulfhydryl group of the N-terminal cysteine of a prolipoprotein, the first step in the formation of mature lipoproteins. This is Phosphatidylglycerol--prolipoprotein diacylglyceryl transferase from Pseudomonas aeruginosa (strain LESB58).